A 441-amino-acid chain; its full sequence is Ribosomal protein uS12 methylthiotransferase RimO (441 aa).

The MTTase N-terminal domain occupies 6–116 (QKVGIVSLGC…VVAAVHEAAP (111 aa)). Cysteine 15, cysteine 51, cysteine 80, cysteine 147, cysteine 151, and cysteine 154 together coordinate [4Fe-4S] cluster. A Radical SAM core domain is found at 133 to 370 (LTPRHYAYLK…MAAQQEISER (238 aa)). The 67-residue stretch at 373–439 (AQKVGTVIEA…EYDLWGSLAG (67 aa)) folds into the TRAM domain.

It belongs to the methylthiotransferase family. RimO subfamily. The cofactor is [4Fe-4S] cluster.

The protein resides in the cytoplasm. The enzyme catalyses L-aspartate(89)-[ribosomal protein uS12]-hydrogen + (sulfur carrier)-SH + AH2 + 2 S-adenosyl-L-methionine = 3-methylsulfanyl-L-aspartate(89)-[ribosomal protein uS12]-hydrogen + (sulfur carrier)-H + 5'-deoxyadenosine + L-methionine + A + S-adenosyl-L-homocysteine + 2 H(+). Functionally, catalyzes the methylthiolation of an aspartic acid residue of ribosomal protein uS12. The chain is Ribosomal protein uS12 methylthiotransferase RimO from Rhodospirillum rubrum (strain ATCC 11170 / ATH 1.1.1 / DSM 467 / LMG 4362 / NCIMB 8255 / S1).